The sequence spans 392 residues: Multidrug resistance protein MdtL (392 aa).

The next 12 helical transmembrane spans lie at 4 to 24 (FLLCSFALVLLYPSGIDMYLV), 38 to 58 (AQLHIAFSVYLAGMASAMLFA), 70 to 90 (VAIVGAVIFVVASLLCAQAHA), 95 to 115 (LVGRFIQGIGAGSCYVVAFAI), 131 to 151 (LLNGITCIIPVLAPVLGHLIM), 158 to 178 (SLFYTMTGMGVMVGLLSVFIL), 209 to 229 (ILITTLSVTAILTYVNVSPVL), 246 to 266 (ALMAMISMAVSFSTPFALSLF), 270 to 290 (TLMLTSQVLFLAAGLALSLAT), 294 to 314 (LTLIGLGMICAGFSVGFGVAM), 331 to 351 (VLGIAQVCGSSLWIWLAAIIG), and 357 to 377 (MLIGILIACSIVSLVLLLVVT).

The protein belongs to the major facilitator superfamily. DHA1 family. MdtL (TC 2.A.1.2.22) subfamily.

It is found in the cell inner membrane. This chain is Multidrug resistance protein MdtL, found in Klebsiella pneumoniae (strain 342).